The sequence spans 178 residues: MSRIGKKTIVIPAGVTVTLNGSTATVKGPKGELVKEFNPEITINIEGNEINVSRPTDNKNHRALHGTTRAILNNMVVGVSEGYEKKLELIGVGYRAQKQGDKLVLNVGYSHPVEFVAPKGVEIEVPANTQVIVKGYNKEHVGELAANIRAVRPPEPYKGKGIRYEGEHVRRKEGKTGK.

It belongs to the universal ribosomal protein uL6 family. Part of the 50S ribosomal subunit.

Its function is as follows. This protein binds to the 23S rRNA, and is important in its secondary structure. It is located near the subunit interface in the base of the L7/L12 stalk, and near the tRNA binding site of the peptidyltransferase center. In Listeria innocua serovar 6a (strain ATCC BAA-680 / CLIP 11262), this protein is Large ribosomal subunit protein uL6.